An 80-amino-acid chain; its full sequence is Defensin-like protein 46 (80 aa).

Positions 1–27 are cleaved as a signal peptide; that stretch reads MGSTKTLVTCFLTIILAVSLSNHNVLA. Disulfide bonds link Cys40-Cys78, Cys44-Cys65, Cys50-Cys76, and Cys54-Cys77.

The protein belongs to the DEFL family.

Its subcellular location is the secreted. This Arabidopsis thaliana (Mouse-ear cress) protein is Defensin-like protein 46.